Consider the following 672-residue polypeptide: DNA ligase (672 aa).

NAD(+) contacts are provided by residues 30 to 34 (DAVYD), 79 to 80 (SL), and glutamate 110. The active-site N6-AMP-lysine intermediate is lysine 112. NAD(+) is bound by residues arginine 133, glutamate 170, lysine 287, and lysine 311. Zn(2+) contacts are provided by cysteine 405, cysteine 408, cysteine 423, and cysteine 429. The BRCT domain maps to 590–672 (ADELPLSGKT…IALLTEHGAI (83 aa)).

The protein belongs to the NAD-dependent DNA ligase family. LigA subfamily. It depends on Mg(2+) as a cofactor. Mn(2+) serves as cofactor.

The enzyme catalyses NAD(+) + (deoxyribonucleotide)n-3'-hydroxyl + 5'-phospho-(deoxyribonucleotide)m = (deoxyribonucleotide)n+m + AMP + beta-nicotinamide D-nucleotide.. In terms of biological role, DNA ligase that catalyzes the formation of phosphodiester linkages between 5'-phosphoryl and 3'-hydroxyl groups in double-stranded DNA using NAD as a coenzyme and as the energy source for the reaction. It is essential for DNA replication and repair of damaged DNA. This is DNA ligase from Marinomonas sp. (strain MWYL1).